The primary structure comprises 252 residues: Octanoyltransferase (252 aa).

The span at 1–21 (MPSAPAAPAAPAAPDAAASVA) shows a compositional bias: low complexity. The interval 1–22 (MPSAPAAPAAPAAPDAAASVAP) is disordered. The 182-residue stretch at 56 to 237 (PDTDDEIWVV…RLIAHLDGAT (182 aa)) folds into the BPL/LPL catalytic domain. Residues 96–103 (RGGQITYH), 168–170 (ALG), and 181–183 (GLS) each bind substrate. Cys-199 functions as the Acyl-thioester intermediate in the catalytic mechanism.

The protein belongs to the LipB family.

Its subcellular location is the cytoplasm. The catalysed reaction is octanoyl-[ACP] + L-lysyl-[protein] = N(6)-octanoyl-L-lysyl-[protein] + holo-[ACP] + H(+). It functions in the pathway protein modification; protein lipoylation via endogenous pathway; protein N(6)-(lipoyl)lysine from octanoyl-[acyl-carrier-protein]: step 1/2. Catalyzes the transfer of endogenously produced octanoic acid from octanoyl-acyl-carrier-protein onto the lipoyl domains of lipoate-dependent enzymes. Lipoyl-ACP can also act as a substrate although octanoyl-ACP is likely to be the physiological substrate. The protein is Octanoyltransferase of Burkholderia pseudomallei (strain 668).